A 341-amino-acid chain; its full sequence is MDTVCIAVVGAGVIGLSTAACISQLVPGCTVTVISDRFTPDTTSNVAAGMLIPHTCADTPVPTQKRWFRETFEHLSEIAKSAEAADAGVHLVSGWQIFRSVPAEEVPFWADVVLGFRKMTEAELKRFPQYVFGQAFTTLKCETSAYLPWLERRIKGSGGLLLTRRIEDLWELQPSFDIVVNCSGLGSRRLVGDPMISPVRGQVLQARAPWVKHFIRDGGGLTYVYPGMSYVTLGGTRQKGDWNRSPDAELSREIFSRCCTLEPSLHRAYDIKEKVGLRPSRPGVRLQKEILVRGQQTLPVVHNYGHGSGGISVHWGSALEATRLVMECIHTLRTPASLSKL.

The FAD site is built by Asp-36, Arg-37, Thr-43, Ser-44, Met-50, Gly-307, Ile-311, and Ser-312. The Microbody targeting signal motif lies at 339–341 (SKL).

The protein belongs to the DAMOX/DASOX family. As to quaternary structure, dimer or tetramer. Interacts with PEX5; the interaction is direct and required for localization of DDO to the peroxisome. Requires FAD as cofactor. As to expression, expressed in the small intestine (at protein level). Expressed in the ependymal cell layer of the telencephalic ventricles, hippocampus, thalamus, cerebellum, midbrain region, pons, olfactory bulbs, and cortex. Repressed in the testis. Expressed in the kidney, liver, stomach, pancreas, uterus, lactating breast, involuting mammary gland, brain, heart, lung, and skin. In terms of tissue distribution, expressed in kidney, liver, pancreas, and in the mammary gland regardless of lactation status.

The protein resides in the peroxisome matrix. It is found in the cytoplasm. Its subcellular location is the cytosol. The enzyme catalyses D-aspartate + O2 + H2O = oxaloacetate + H2O2 + NH4(+). The catalysed reaction is D-glutamate + O2 + H2O = H2O2 + 2-oxoglutarate + NH4(+). Inhibited by the benzodiazepine olanzapine; chronic systemic administration of the benzodiazepine increases levels of D-aspartate and L-glutamate in the prefrontal cortex. Efficiently inhibited by 5-aminonicotinic acid (5-AN) and 1,4-Dihydropyrido[2,3-b]pyrazine-2,3-dione (DPPD). Inhibited by aminooxyacetic acid, thiolactomycin, anthranilic acid, malonate, meso-tartrate and L-tartrate. Benzoate has no effect on activity. In terms of biological role, selectively catalyzes the oxidative deamination of acidic amino acids. Suppresses the level of D-aspartate in the brain, an amino acid that can act as an agonist for glutamate receptors. Protects the organism from the toxicity of D-amino acids. May also function in the intestine. Its function is as follows. Selectively catalyzes the oxidative deamination of acidic amino acids. Does not exhibit D-aspartate oxidase activity. This chain is D-aspartate oxidase (Ddo), found in Mus musculus (Mouse).